Reading from the N-terminus, the 208-residue chain is Ectodysplasin-A receptor-associated adapter protein (208 aa).

The segment covering 1 to 18 (MASPDDPLRSDHMAKEPV) has biased composition (basic and acidic residues). Positions 1–99 (MASPDDPLRS…KGSCSCPSCS (99 aa)) are disordered. Residues 49–61 (TVNSNCPPNSDDQ) are compositionally biased toward polar residues. The Death domain occupies 116–195 (DTIRIKLDPC…KILRRWVDEE (80 aa)).

In terms of assembly, binds EDAR. Self-associates and binds TRAF1, TRAF2 and TRAF3.

The protein localises to the cytoplasm. In terms of biological role, adapter protein that interacts with EDAR DEATH domain and couples the receptor to EDA signaling pathway during morphogenesis of ectodermal organs. Mediates the activation of NF-kappa-B. This Mus musculus (Mouse) protein is Ectodysplasin-A receptor-associated adapter protein (Edaradd).